The sequence spans 161 residues: Ragulator complex protein LAMTOR1 (161 aa).

A disordered region spans residues 1 to 43; sequence MGCCYSSENEDSDQDREERKLLLDPSSTPTKALNGAEPNYHSL. The N-myristoyl glycine moiety is linked to residue Gly2. S-palmitoyl cysteine attachment occurs at residues Cys3 and Cys4. A Glycyl lysine isopeptide (Lys-Gly) (interchain with G-Cter in ubiquitin) cross-link involves residue Lys20. Position 27 is a phosphoserine (Ser27). Thr28 bears the Phosphothreonine mark. Lys31 participates in a covalent cross-link: Glycyl lysine isopeptide (Lys-Gly) (interchain with G-Cter in ubiquitin). A phosphoserine mark is found at Ser42 and Ser56. Lys60 participates in a covalent cross-link: Glycyl lysine isopeptide (Lys-Gly) (interchain with G-Cter in ubiquitin). Position 98 is a phosphoserine (Ser98). Residues Lys103 and Lys104 each participate in a glycyl lysine isopeptide (Lys-Gly) (interchain with G-Cter in ubiquitin) cross-link. Residues 121–161 are interaction with LAMTOR2 and LAMTOR3; the sequence is SEPIPFSDLQQVSRIAAYAYSALSQIRVDAKEELVVQFGIP. Ser141 bears the Phosphoserine mark.

It belongs to the LAMTOR1 family. Part of the Ragulator complex composed of LAMTOR1, LAMTOR2, LAMTOR3, LAMTOR4 and LAMTOR5. LAMTOR4 and LAMTOR5 form a heterodimer that interacts, through LAMTOR1, with a LAMTOR2, LAMTOR3 heterodimer. Interacts with LAMTOR2 and LAMTOR3; the interaction is direct. The Ragulator complex interacts with both the mTORC1 complex and heterodimers constituted of the Rag GTPases RagA/RRAGA, RagB/RRAGB, RagC/RRAGC and RagD/RRAGD; regulated by amino acid availability. The Ragulator complex interacts with SLC38A9; the probable amino acid sensor. Component of the lysosomal folliculin complex (LFC), composed of FLCN, FNIP1 (or FNIP2), RagA/RRAGA or RagB/RRAGB GDP-bound, RagC/RRAGC or RagD/RRAGD GTP-bound, and Ragulator. Associates with the lysosomal V-ATPase complex; interaction promotes the guanine nucleotide exchange factor (GEF) of the Ragulator complex. Interacts with MMP14. Interacts with CDKN1B; prevents the interaction of CDKN1B with RHOA leaving RHOA in a form accessible to activation by ARHGEF2. Interacts with PIP4P1. N-terminal myristoylation and palmitoylation mediates its recruitment to lysosome membranes, thereby promoting localization of the Ragulator complex to lysosomes. N-myristoylation by NMT1 is required for palmitoylation at Cys-3 and Cys-4. Post-translationally, ubiquitinated at Lys-60, Lys-103 and Lys-104 by UBE3A in neurons, promoting its degradation by the proteasome, thereby limiting mTORC1 signaling and activity-dependent synaptic remodeling. Ubiquitination at Lys-20 impairs the association with the lysosomal V-ATPase complex. Deubiquitination at Lys-20 by USP32 promotes the association with the lysosomal V-ATPase complex and subsequent activation of the mTORC1 complex.

It localises to the lysosome membrane. The protein resides in the late endosome membrane. Its function is as follows. Key component of the Ragulator complex, a multiprotein complex involved in amino acid sensing and activation of mTORC1, a signaling complex promoting cell growth in response to growth factors, energy levels, and amino acids. Activated by amino acids through a mechanism involving the lysosomal V-ATPase, the Ragulator plays a dual role for the small GTPases Rag (RagA/RRAGA, RagB/RRAGB, RagC/RRAGC and/or RagD/RRAGD): it (1) acts as a guanine nucleotide exchange factor (GEF), activating the small GTPases Rag and (2) mediates recruitment of Rag GTPases to the lysosome membrane. Activated Ragulator and Rag GTPases function as a scaffold recruiting mTORC1 to lysosomes where it is in turn activated. LAMTOR1 is directly responsible for anchoring the Ragulator complex to the lysosomal membrane. LAMTOR1 wraps around the other subunits of the Ragulator complex to hold them in place and interacts with the Rag GTPases, thereby playing a key role in the recruitment of the mTORC1 complex to lysosomes. Also involved in the control of embryonic stem cells differentiation via non-canonical RagC/RRAGC and RagD/RRAGD activation: together with FLCN, it is necessary to recruit and activate RagC/RRAGC and RagD/RRAGD at the lysosomes, and to induce exit of embryonic stem cells from pluripotency via non-canonical, mTOR-independent TFE3 inactivation. Also required for late endosomes/lysosomes biogenesis it may regulate both the recycling of receptors through endosomes and the MAPK signaling pathway through recruitment of some of its components to late endosomes. May be involved in cholesterol homeostasis regulating LDL uptake and cholesterol release from late endosomes/lysosomes. May also play a role in RHOA activation. The protein is Ragulator complex protein LAMTOR1 of Mus musculus (Mouse).